A 185-amino-acid chain; its full sequence is Large ribosomal subunit protein uL5m (185 aa).

It belongs to the universal ribosomal protein uL5 family.

Its subcellular location is the mitochondrion. The sequence is that of Large ribosomal subunit protein uL5m (RPL5) from Brassica napus (Rape).